We begin with the raw amino-acid sequence, 200 residues long: Small ribosomal subunit protein eS8A (200 aa).

2 disordered regions span residues 1-40 (MGIT…RIGP) and 123-145 (SKGK…KHSA). Over residues 135–145 (KSKHVQRKHSA) the composition is skewed to basic residues.

Belongs to the eukaryotic ribosomal protein eS8 family. In terms of assembly, component of the small ribosomal subunit (SSU). Mature yeast ribosomes consist of a small (40S) and a large (60S) subunit. The 40S small subunit contains 1 molecule of ribosomal RNA (18S rRNA) and at least 33 different proteins. The large 60S subunit contains 3 rRNA molecules (25S, 5.8S and 5S rRNA) and at least 46 different proteins.

Its subcellular location is the cytoplasm. In terms of biological role, component of the ribosome, a large ribonucleoprotein complex responsible for the synthesis of proteins in the cell. The small ribosomal subunit (SSU) binds messenger RNAs (mRNAs) and translates the encoded message by selecting cognate aminoacyl-transfer RNA (tRNA) molecules. The large subunit (LSU) contains the ribosomal catalytic site termed the peptidyl transferase center (PTC), which catalyzes the formation of peptide bonds, thereby polymerizing the amino acids delivered by tRNAs into a polypeptide chain. The nascent polypeptides leave the ribosome through a tunnel in the LSU and interact with protein factors that function in enzymatic processing, targeting, and the membrane insertion of nascent chains at the exit of the ribosomal tunnel. This chain is Small ribosomal subunit protein eS8A (rps801), found in Schizosaccharomyces pombe (strain 972 / ATCC 24843) (Fission yeast).